The following is a 108-amino-acid chain: UPF0102 protein Sden_0272 (108 aa).

Belongs to the UPF0102 family.

In Shewanella denitrificans (strain OS217 / ATCC BAA-1090 / DSM 15013), this protein is UPF0102 protein Sden_0272.